Here is a 502-residue protein sequence, read N- to C-terminus: Protein ANKUB1 (502 aa).

The sequence is that of Protein ANKUB1 (ANKUB1) from Homo sapiens (Human).